A 194-amino-acid chain; its full sequence is Putative 3-methyladenine DNA glycosylase (194 aa).

This sequence belongs to the DNA glycosylase MPG family.

The protein is Putative 3-methyladenine DNA glycosylase of Myxococcus xanthus (strain DK1622).